Consider the following 339-residue polypeptide: Ketol-acid reductoisomerase (NADP(+)) (339 aa).

The KARI N-terminal Rossmann domain occupies 1 to 182 (MRVYYDRDAD…GGGRAGIIET (182 aa)). NADP(+) contacts are provided by residues 24–27 (YGSQ), arginine 48, serine 51, serine 53, and 83–86 (DELQ). The active site involves histidine 108. Glycine 134 is a binding site for NADP(+). The KARI C-terminal knotted domain occupies 183-328 (TFKEECETDL…AKLRDMMPWI (146 aa)). 4 residues coordinate Mg(2+): aspartate 191, glutamate 195, glutamate 227, and glutamate 231. Substrate is bound at residue serine 252.

Belongs to the ketol-acid reductoisomerase family. The cofactor is Mg(2+).

The catalysed reaction is (2R)-2,3-dihydroxy-3-methylbutanoate + NADP(+) = (2S)-2-acetolactate + NADPH + H(+). It catalyses the reaction (2R,3R)-2,3-dihydroxy-3-methylpentanoate + NADP(+) = (S)-2-ethyl-2-hydroxy-3-oxobutanoate + NADPH + H(+). The protein operates within amino-acid biosynthesis; L-isoleucine biosynthesis; L-isoleucine from 2-oxobutanoate: step 2/4. It functions in the pathway amino-acid biosynthesis; L-valine biosynthesis; L-valine from pyruvate: step 2/4. Its function is as follows. Involved in the biosynthesis of branched-chain amino acids (BCAA). Catalyzes an alkyl-migration followed by a ketol-acid reduction of (S)-2-acetolactate (S2AL) to yield (R)-2,3-dihydroxy-isovalerate. In the isomerase reaction, S2AL is rearranged via a Mg-dependent methyl migration to produce 3-hydroxy-3-methyl-2-ketobutyrate (HMKB). In the reductase reaction, this 2-ketoacid undergoes a metal-dependent reduction by NADPH to yield (R)-2,3-dihydroxy-isovalerate. The polypeptide is Ketol-acid reductoisomerase (NADP(+)) (Bradyrhizobium diazoefficiens (strain JCM 10833 / BCRC 13528 / IAM 13628 / NBRC 14792 / USDA 110)).